Consider the following 270-residue polypeptide: Ribosomal RNA-processing protein 7 homolog (270 aa).

A coiled-coil region spans residues 233–268 (TFQIKKNRQEKAQELLKKFEEDRKRITQLKQARNFK).

This sequence belongs to the RRP7 family.

This chain is Ribosomal RNA-processing protein 7 homolog, found in Caenorhabditis elegans.